The following is a 237-amino-acid chain: Speedy protein E4 (237 aa).

Positions 1–61 are disordered; sequence MASGQARPPF…KRKSEWSDES (61 aa).

The protein belongs to the Speedy/Ringo family. Predominantly expressed in testis.

The chain is Speedy protein E4 from Homo sapiens (Human).